Reading from the N-terminus, the 469-residue chain is Probable Xaa-Pro aminopeptidase AN0832 (469 aa).

Residues D260, D271, E398, and E437 each contribute to the Mn(2+) site.

It belongs to the peptidase M24B family. Mn(2+) serves as cofactor.

It catalyses the reaction Release of any N-terminal amino acid, including proline, that is linked to proline, even from a dipeptide or tripeptide.. Its function is as follows. Catalyzes the removal of a penultimate prolyl residue from the N-termini of peptides. In Emericella nidulans (strain FGSC A4 / ATCC 38163 / CBS 112.46 / NRRL 194 / M139) (Aspergillus nidulans), this protein is Probable Xaa-Pro aminopeptidase AN0832.